Here is a 118-residue protein sequence, read N- to C-terminus: Small ribosomal subunit protein uS13 (118 aa).

The tract at residues 94–118 is disordered; the sequence is SLPLRGQRTKTNARTRKGPRKPIKK.

It belongs to the universal ribosomal protein uS13 family. As to quaternary structure, part of the 30S ribosomal subunit. Forms a loose heterodimer with protein S19. Forms two bridges to the 50S subunit in the 70S ribosome.

Located at the top of the head of the 30S subunit, it contacts several helices of the 16S rRNA. In the 70S ribosome it contacts the 23S rRNA (bridge B1a) and protein L5 of the 50S subunit (bridge B1b), connecting the 2 subunits; these bridges are implicated in subunit movement. Contacts the tRNAs in the A and P-sites. This Shewanella oneidensis (strain ATCC 700550 / JCM 31522 / CIP 106686 / LMG 19005 / NCIMB 14063 / MR-1) protein is Small ribosomal subunit protein uS13.